A 299-amino-acid chain; its full sequence is Transcription elongation factor A protein 2 (299 aa).

Residues 6 to 83 (EEIARIARRL…KSWKKLLDAS (78 aa)) form the TFIIS N-terminal domain. Lysine 58 is covalently cross-linked (Glycyl lysine isopeptide (Lys-Gly) (interchain with G-Cter in ubiquitin)). 2 positions are modified to phosphoserine: serine 60 and serine 100. The disordered stretch occupies residues 86–128 (KARERGRGMPLPTSSRDASEAPDPSRKRPELPRAPSTPRITTF). A compositionally biased stretch (basic and acidic residues) spans 102–116 (DASEAPDPSRKRPEL). Positions 138-254 (VRNKCREMLT…EHQMARTGGT (117 aa)) constitute a TFIIS central domain. The TFIIS-type zinc-finger motif lies at 257 to 297 (DLFTCGKCRKKNCTYTQVQTRSSDEPMTTFVVCNECGNRWK). Residues cysteine 261, cysteine 264, cysteine 289, and cysteine 292 each coordinate Zn(2+).

The protein belongs to the TFS-II family. In terms of assembly, interacts with the basal transcription factor GTF2B. Interacts with REXO1. In terms of tissue distribution, testis and ovary specific.

The protein localises to the nucleus. In terms of biological role, necessary for efficient RNA polymerase II transcription elongation past template-encoded arresting sites. The arresting sites in DNA have the property of trapping a certain fraction of elongating RNA polymerases that pass through, resulting in locked ternary complexes. Cleavage of the nascent transcript by S-II allows the resumption of elongation from the new 3'-terminus. In Homo sapiens (Human), this protein is Transcription elongation factor A protein 2 (TCEA2).